A 139-amino-acid chain; its full sequence is Glucanase inhibitor protein 3 (139 aa).

One can recognise a Peptidase S1 domain in the interval 1–138 (VLTLEKPSKF…GIEWINSVIK (138 aa)). Disulfide bonds link Cys-61–Cys-73 and Cys-83–Cys-114.

It belongs to the peptidase S1 family.

Its subcellular location is the secreted. In terms of biological role, secreted effector that suppresses host plant glucan elicitor-mediated defense responses. Targets host endoglucanases and inhibits the endoglucanase-mediated release of elicitor-active glucan oligosaccharides from P.sojae cell walls. The polypeptide is Glucanase inhibitor protein 3 (Phytophthora sojae (Soybean stem and root rot agent)).